The sequence spans 227 residues: Cytochrome c oxidase subunit 2 (227 aa).

Residues 1–14 (MAYPFQLGLQDATS) are Mitochondrial intermembrane-facing. A helical membrane pass occupies residues 15-45 (PIMEELLHFHDHTLMIVFLISSLVLYIISLM). The Mitochondrial matrix segment spans residues 46-59 (LTTKLTHTSTMDAQ). Residues 60 to 87 (EVETVWTILPAIILILIALPSLRILYMM) form a helical membrane-spanning segment. Over 88 to 227 (DEINNPSLTV…YFETWSAVMV (140 aa)) the chain is Mitochondrial intermembrane. Residues H161, C196, E198, C200, H204, and M207 each contribute to the Cu cation site. E198 contributes to the Mg(2+) binding site. Position 218 is a phosphotyrosine (Y218).

This sequence belongs to the cytochrome c oxidase subunit 2 family. As to quaternary structure, component of the cytochrome c oxidase (complex IV, CIV), a multisubunit enzyme composed of 14 subunits. The complex is composed of a catalytic core of 3 subunits MT-CO1, MT-CO2 and MT-CO3, encoded in the mitochondrial DNA, and 11 supernumerary subunits COX4I, COX5A, COX5B, COX6A, COX6B, COX6C, COX7A, COX7B, COX7C, COX8 and NDUFA4, which are encoded in the nuclear genome. The complex exists as a monomer or a dimer and forms supercomplexes (SCs) in the inner mitochondrial membrane with NADH-ubiquinone oxidoreductase (complex I, CI) and ubiquinol-cytochrome c oxidoreductase (cytochrome b-c1 complex, complex III, CIII), resulting in different assemblies (supercomplex SCI(1)III(2)IV(1) and megacomplex MCI(2)III(2)IV(2)). Found in a complex with TMEM177, COA6, COX18, COX20, SCO1 and SCO2. Interacts with TMEM177 in a COX20-dependent manner. Interacts with COX20. Interacts with COX16. The cofactor is Cu cation.

Its subcellular location is the mitochondrion inner membrane. It carries out the reaction 4 Fe(II)-[cytochrome c] + O2 + 8 H(+)(in) = 4 Fe(III)-[cytochrome c] + 2 H2O + 4 H(+)(out). Component of the cytochrome c oxidase, the last enzyme in the mitochondrial electron transport chain which drives oxidative phosphorylation. The respiratory chain contains 3 multisubunit complexes succinate dehydrogenase (complex II, CII), ubiquinol-cytochrome c oxidoreductase (cytochrome b-c1 complex, complex III, CIII) and cytochrome c oxidase (complex IV, CIV), that cooperate to transfer electrons derived from NADH and succinate to molecular oxygen, creating an electrochemical gradient over the inner membrane that drives transmembrane transport and the ATP synthase. Cytochrome c oxidase is the component of the respiratory chain that catalyzes the reduction of oxygen to water. Electrons originating from reduced cytochrome c in the intermembrane space (IMS) are transferred via the dinuclear copper A center (CU(A)) of subunit 2 and heme A of subunit 1 to the active site in subunit 1, a binuclear center (BNC) formed by heme A3 and copper B (CU(B)). The BNC reduces molecular oxygen to 2 water molecules using 4 electrons from cytochrome c in the IMS and 4 protons from the mitochondrial matrix. The polypeptide is Cytochrome c oxidase subunit 2 (MT-CO2) (Lycalopex vetulus (Hoary fox)).